The sequence spans 313 residues: MKPVKTGTVHPVPSAAKQSGWRDLFYSKKAAPYLFTAPFVLSFLVFFLYPIISVFIMSFQRILPGEVSFVGLSNYTALNNPTFYTALWNTLEYTFWTLIVLIPVPLLLAIFLNSKLVKFRNIFKSALFIPALTSTIVAGIIFRLIFGEMETSLANSILLKLGFSPQNWMNNEHTGMFLMVLLASWRWMGINILYFLAGLQNVPKELYEAADIDGANTMKKFLHITLPFLKPVTVYVLTISIIGGFRMFEESYVLWQNNSPGNIGLTLVGYLYQQGLAYNEMGYGAAIGIVLLIVILVVSLISLKLSGSFKGEG.

The next 6 helical transmembrane spans lie at Phe-39 to Phe-59, Leu-91 to Phe-111, Ala-126 to Phe-146, Met-176 to Leu-196, Ile-224 to Gly-244, and Met-281 to Ile-301. The ABC transmembrane type-1 domain maps to Leu-87–Ser-302.

The protein belongs to the binding-protein-dependent transport system permease family. MalFG subfamily. The complex is composed of two ATP-binding proteins (MsmX), two transmembrane proteins (AraP and AraQ) and a solute-binding protein (AraN).

It localises to the cell membrane. Its function is as follows. Part of the ABC transporter complex AraNPQ involved in the uptake of arabinooligosaccharides. Transports alpha-1,5-arabinooligosaccharides, at least up to four L-arabinosyl units. Responsible for the translocation of the substrate across the membrane. In Bacillus subtilis (strain 168), this protein is Arabinooligosaccharides transport system permease protein AraP.